Consider the following 232-residue polypeptide: MGQKVHPNGIRLGIVKPWNSTWYANTKEFADNLDSDFKVRQFLIKELAKASVSRIVIERPAKSIRVTIHTARPGIVIGKKGEDVEKLRKVVANIAGVPAQINIAEVRKPELDAKLVADSITSQLERRVMFRRAMKRAVQNAMRLGAKGIKVEVSGRLGGAEIARTEWYREGRVPLHTLRADIDYNTSEAHTTYGVIGVKVWIFKGEILGGMAAVEQPEPAAQPKKQQRKGRK.

A KH type-2 domain is found at 39 to 107 (VRQFLIKELA…PAQINIAEVR (69 aa)).

This sequence belongs to the universal ribosomal protein uS3 family. In terms of assembly, part of the 30S ribosomal subunit. Forms a tight complex with proteins S10 and S14.

In terms of biological role, binds the lower part of the 30S subunit head. Binds mRNA in the 70S ribosome, positioning it for translation. The sequence is that of Small ribosomal subunit protein uS3 from Serratia proteamaculans (strain 568).